A 338-amino-acid chain; its full sequence is 6-phosphogluconolactonase (338 aa).

Belongs to the cycloisomerase 2 family.

The catalysed reaction is 6-phospho-D-glucono-1,5-lactone + H2O = 6-phospho-D-gluconate + H(+). It functions in the pathway carbohydrate degradation; pentose phosphate pathway; D-ribulose 5-phosphate from D-glucose 6-phosphate (oxidative stage): step 2/3. Functionally, catalyzes the hydrolysis of 6-phosphogluconolactone to 6-phosphogluconate. This chain is 6-phosphogluconolactonase, found in Blochmanniella floridana.